The primary structure comprises 1706 residues: MSTSQTLGGATRCGRIIGPSLDKIIKNAAWRKHTYLVSSCKSVLDKLESLPDDFHDPSSVVSGLAASDADSVLQPFLLSLETAYSKVVEPSLDCAFKLFSLSILRGEIQSSKQDSILFKLVNAVSKVGAIAEEPIQLAVLRVLLAAVRSPCILIRGDCLLHVVKTCYNIYLGGLSGTTQICAKSVLAQMMLVIFTRSEEDSLDVSVKTIYVNELLTFTDKSVNEGSSVYFCQGFVNEVMAAGQGSPLPPPDVIQILLQNPETETVMTPDSPSFRGYVANGEGDSETGDMSKVRQDAFLLFKNLCKLSMRFSSKENNDDQIMVRGKTLSLELLKVIIDNGGSVWRTNESFINAVKQYLCLSLLKNSAVSIMSIFQLQCAIFMSLLSKLRSVLKAEIGIFFPMIVLRVLENVLQPSYLQKMTVLNLLDKMSQDPQLMVDIFVNYDCDVESSNILERIVNGLLKTALGPPTGSSTTLSPAQDSTFRNDSVKCLVNLAKAMGNWMDQQLKVNETVWPKGSQVYASMDSNASQISELEGTISDCDSQPDTSNPEAYDASMLEQRRAYKIELQKGISLFNRKPSKGVEFLISTKKIGSSPEEVASFLMKTAGLNGTVIGDYLGERDELPLKVMHAYVDSFNFEKKDFVEAIRFFLRGFRLPGEAQKIDRIMEKFAEHYWKCNPGSFTSADTAYVLAYSVIMLNTDAHNNMVKDKMTKADFVRNNRGIDDGKDLPEEYLGSLYDRVVKEEIRMNSDTLAPQNKQVNGLNKLLGLDGILNLVSWMQPDEKPHGANGRLIRDIQEQFQAKPEKSESVYHTVTDISILRFILEVSWGPMLAAFSVTIDQSDDRLATSLCLQGFRYAVHVTAVMGMQTQRDAFVTSMAKFTNLHCAADMKQKNVDAVKAIITIAIEDGNHLHGSWEHILTCLSRIEHLQLLGEVSPSEKRYVPTKKAEVDDKKALGFPNLKKRGSFQNPSVMAVVRGGSYDSTSLVKSVPKLVTPEQIKSFIANLNLLDQIGNFELNHVYANSQRLNSEAIVSFVKALCKVSMSELQSPTDPRVFSLTKLVETAHYNMNRIRLVWSRIWNVLSDFFVSVGLSENLSVAIFVMDSLRQLSMKFLEREELANYHFQHEFLRPFVVVMQKSSSAEIRELIVRCVSQMVLSRVSNVKSGWKNVFTVFTTAALDERKNIVLLAFETIEKIVRDHFHCIIETEITVYADCIRCLITFTNSKFEGDIGFNTIEFLRFCALKLEEGGLVLNEKLKNNTISALKEDFSDTQSFTDLDEQVSYWIPLLTGLCKQVSDPRPAIRKRSIEVLFHILMDHGHLFTRPFWTGIFSSIILPVFNNIRSKTDMLFEESVDSPSSASLDTEETTWDVETSTLALQLLVDLLVKFFRSVRSQLPSVVSIIVGFIKSPFQGSTGSGISVLLHLADGLARSASEDEWREIFLALKEAASLTFAGFMKVLRTMDDIEDVETLSGQSVNIGDLDDDSLHIMSYVVSRTKKHIDVLSQIVEVVSDLYRRNQFSLSASHVDILADIFSCIASHAQQLNTDTVLRRKFKRACSVQNLTEPQLLNFENEAYKSYMMFLQDMVTCNPNVSKELDLESRLVTECAKIVKIYLKCTDPQQQEQQQRKPVLWVLPMESDRVEEATARTSLLVSSLEALCSLEAESLKKHVSSFFPLLVDLVRTEHCSPQVPYVLSNVLKSCIGPILA.

Residues 555–742 form the SEC7 domain; that stretch reads MLEQRRAYKI…GSLYDRVVKE (188 aa). E657 is an active-site residue.

As to quaternary structure, homodimer.

It localises to the cytoplasm. Its subcellular location is the cytosol. It is found in the membrane. Inhibited by brefeldin A. In terms of biological role, activates the ARF proteins by exchanging bound GDP for free GTP. Plays a role in vesicular protein sorting. The sequence is that of Brefeldin A-inhibited guanine nucleotide-exchange protein 4 (BIG4) from Arabidopsis thaliana (Mouse-ear cress).